We begin with the raw amino-acid sequence, 210 residues long: Glutathione S-transferase P (210 aa).

A GST N-terminal domain is found at 2-81 (PPYTIVYFPV…HLGRSLGLYG (80 aa)). Y4 carries the post-translational modification Phosphotyrosine; by EGFR. Residues Y8, R14, W39, K45, and 52 to 53 (QL) contribute to the glutathione site. Phosphothreonine is present on T62. Residue 65–66 (QS) coordinates glutathione. Residues 83 to 204 (DQREAALVDM…SSPDHVNRPI (122 aa)) form the GST C-terminal domain. K103 and K116 each carry N6-succinyllysine. Residue K128 is modified to N6-acetyllysine.

This sequence belongs to the GST superfamily. Pi family. As to quaternary structure, homodimer. Interacts with CDK5.

It localises to the cytoplasm. It is found in the mitochondrion. The protein localises to the nucleus. The catalysed reaction is RX + glutathione = an S-substituted glutathione + a halide anion + H(+). The enzyme catalyses prostaglandin J2 + glutathione = prostaglandin J2-S-(R)-glutathione. It carries out the reaction prostaglandin J2 + glutathione = prostaglandin J2-S-(S)-glutathione. It catalyses the reaction prostaglandin A2 + glutathione = prostaglandin A2-S-(S)-glutathione. The catalysed reaction is 11(S)-hydroxy-14(S),15(S)-epoxy-(5Z,8Z,12E)-eicosatrienoate + glutathione = (11S,15S)-dihydroxy-14(R)-S-glutathionyl-(5Z,8Z,12E)-eicosatrienoate. In terms of biological role, conjugation of reduced glutathione to a wide number of exogenous and endogenous hydrophobic electrophiles. Involved in the formation of glutathione conjugates of both prostaglandin A2 (PGA2) and prostaglandin J2 (PGJ2). Participates in the formation of novel hepoxilin regioisomers. Negatively regulates CDK5 activity via p25/p35 translocation to prevent neurodegeneration. The sequence is that of Glutathione S-transferase P (GSTP1) from Cricetulus longicaudatus (Long-tailed dwarf hamster).